We begin with the raw amino-acid sequence, 224 residues long: UPF0758 protein Bpro_0948 (224 aa).

An MPN domain is found at 102-224; the sequence is LFSTPQAVRD…AVSMAELGLL (123 aa). Zn(2+)-binding residues include H173, H175, and D186. The short motif at 173–186 is the JAMM motif element; the sequence is HNHPSGAATPSRAD.

Belongs to the UPF0758 family.

The chain is UPF0758 protein Bpro_0948 from Polaromonas sp. (strain JS666 / ATCC BAA-500).